The chain runs to 202 residues: Ribosome maturation factor RimM (202 aa).

Residues Lys121 to Tyr202 enclose the PRC barrel domain.

The protein belongs to the RimM family. Binds ribosomal protein uS19.

The protein localises to the cytoplasm. Functionally, an accessory protein needed during the final step in the assembly of 30S ribosomal subunit, possibly for assembly of the head region. Essential for efficient processing of 16S rRNA. May be needed both before and after RbfA during the maturation of 16S rRNA. It has affinity for free ribosomal 30S subunits but not for 70S ribosomes. This chain is Ribosome maturation factor RimM, found in Polaromonas sp. (strain JS666 / ATCC BAA-500).